We begin with the raw amino-acid sequence, 980 residues long: Zinc finger BED domain-containing protein 6 (980 aa).

A required for nucleolar localization region spans residues 1–89; that stretch reads MSVCTLSVPV…ILAKKFSKDL (89 aa). The segment at 89-109 is disordered; the sequence is LGSGRPVADAPASLASGAPEQ. The BED-type 1 zinc-finger motif lies at 130 to 187; sequence AKTSIVWHFFHVDPQYTWRAICNLCEKSVSRGKPGSHLGTSTLQRHLQARHSPHWTRA. The Zn(2+) site is built by Cys151, Cys154, His175, and His180. The interval 201–239 is disordered; sequence LDLSLSPPSPGSNGSFEYIPTDSVDENRMGKKRDKSASD. Low complexity predominate over residues 203–215; sequence LSLSPPSPGSNGS. The segment at 265-322 adopts a BED-type 2 zinc-finger fold; the sequence is AKTSAVWNFFYTDPQHISRAVCNICKRSVSRGRPGSHLGTSTLQRHLQATHPIHWAVA. Zn(2+)-binding residues include Cys286, Cys289, His310, and His315. Residues 328-397 are disordered; it reads AIGNGLDETE…ADQDNPVHAQ (70 aa). The span at 360–373 shows a compositional bias: acidic residues; it reads TAEDLSDSDTDEPP. Ser383 is subject to Phosphoserine. Residues 868-950 form an HATC (Hobo-Ac-Tam3) domain region; it reads VVDEYFKEKY…EQLIFLKMNL (83 aa).

In terms of tissue distribution, expressed in pancreatic islet cells and weakly expressed in surrounding exocrine tissues (at protein level). Expressed in muscle and brain (at protein level). Shows broad tissue distribution with expression detected in brain, stomach, intestine, heart, kidney, liver, lung, skeletal muscle, ovary, spleen, tail and testis.

Its subcellular location is the nucleus. The protein resides in the nucleolus. It is found in the cytoplasm. Its function is as follows. Transcriptional repressor which binds to the consensus sequence 5'-GCTCGC-3', transcription regulation may be tissue-specific. Regulates the expression of target genes such as: IGF2, PGAP6/TMEM8, ENHO, and PIANP. Acts as a transcriptional repressor of growth factor IGF2, thereby negatively regulating postnatal growth of muscles and internal organs, especially in females. Negatively regulates myoblast differentiation and myoblast mitochondrial activity via its regulation of IGF2 transcription. Negatively regulates the cell cycle of myoblasts, potentially via transcriptional regulation of the E2F family of transcription factors such as: E2F1 and E2F2. Positively regulates the cell cycle and survival of pancreatic beta cells. Binds to the CDH2 gene and may directly repress CDH2 transcription. Probably by controlling CDH2 expression, regulates pancreatic beta cell adhesion, and formation of cell-to-cell junctions between pancreatic beta cells and neural crest stem cells. May also play a role in embryonic beta cell differentiation. May play a role in insulin sensitivity and glucose clearance. This Mus musculus (Mouse) protein is Zinc finger BED domain-containing protein 6.